The chain runs to 168 residues: Fusion protein P6 (168 aa).

A run of 4 helical transmembrane segments spans residues 29–49 (IWPL…AGFF), 52–72 (AGFT…TPTL), 94–114 (FQSL…ALIA), and 143–163 (ALPG…LWPS).

Interacts with P3.

The protein resides in the virion membrane. Functionally, mediates the fusion with the host outer membrane during virus entry into the host cell. The sequence is that of Fusion protein P6 (P6) from Pseudomonas savastanoi pv. phaseolicola (Pseudomonas syringae pv. phaseolicola).